Reading from the N-terminus, the 474-residue chain is E3 ubiquitin-protein ligase CBL-C (474 aa).

Positions 7–145 (PWGRQWEEAR…HALFPGGKYC (139 aa)) are 4H. The Cbl-PTB domain maps to 7–321 (PWGRQWEEAR…GKTHNPDLTE (315 aa)). Positions 146-218 (GHMYQLTKAP…FEFDVFTRLF (73 aa)) are EF-hand-like. Positions 199, 201, and 210 each coordinate Ca(2+). The interval 219-321 (QPWPTLLKNW…GKTHNPDLTE (103 aa)) is SH2-like. Residue R264 coordinates 4-O-phospho-L-tyrosine. The segment at 322-350 (LGQAEPQQRIHVSEEQLQLYWAMDSTFEL) is linker. Y341 carries the phosphotyrosine; by SRC modification. The segment at 351–390 (CKICAESNKDVKIEPCGHLLCSCCLAAWQHSDSQTCPFCR) adopts an RING-type zinc-finger fold. The interaction with RET stretch occupies residues 351 to 474 (CKICAESNKD…ALGPQDPAPA (124 aa)). The tract at residues 409–474 (TAEDSGNSSD…ALGPQDPAPA (66 aa)) is disordered. Residues 432–441 (SAPPLPPRPD) show a composition bias toward pro residues.

Interacts with ubiquitin-conjugating enzyme E2 UBE2D2 and UBE2D3. Isoform 1 interacts with EGFR (tyrosine phosphorylated). Interacts with the SH3 domain proteins LYN and CRK. Interacts (via RING-type zinc finger) with TGFB1I1 (via LIM zinc-binding domain 2); the interaction is direct and enhances the E3 activity. Interacts directly with RET (inactive) and CD2AP; dissociates from RET upon RET activation by GDNF which also increases the interaction with CD2AP suggesting dissociation as CBLC:CD2AP complex. Interacts with SRC; the interaction is enhanced when SRC is phosphorylated at 'Tyr-419'. Phosphorylated on multiple tyrosine residues by SRC. Isoform 1, but not isoform 2, is phosphorylated on tyrosines by EGFR. In terms of processing, autoubiquitinated when phosphorylated at Tyr-341, enhanced by SRC; suggesting proteasomal degradation. Ubiquitous.

It carries out the reaction S-ubiquitinyl-[E2 ubiquitin-conjugating enzyme]-L-cysteine + [acceptor protein]-L-lysine = [E2 ubiquitin-conjugating enzyme]-L-cysteine + N(6)-ubiquitinyl-[acceptor protein]-L-lysine.. With respect to regulation, phosphorylation at Tyr-341 is necessary and sufficient for the activation of E3 activity. Its function is as follows. Acts as an E3 ubiquitin-protein ligase, which accepts ubiquitin from specific E2 ubiquitin-conjugating enzymes, and then transfers it to substrates promoting their degradation by the proteasome. Functionally coupled with the E2 ubiquitin-protein ligases UB2D1, UB2D2 and UB2D3. Regulator of EGFR mediated signal transduction; upon EGF activation, ubiquitinates EGFR. Isoform 1, but not isoform 2, inhibits EGF stimulated MAPK1 activation. Promotes ubiquitination of SRC phosphorylated at 'Tyr-419'. In collaboration with CD2AP may act as regulatory checkpoint for Ret signaling by modulating the rate of RET degradation after ligand activation; CD2AP converts it from an inhibitor to a promoter of RET degradation; the function limits the potency of GDNF on neuronal survival. In Homo sapiens (Human), this protein is E3 ubiquitin-protein ligase CBL-C (CBLC).